We begin with the raw amino-acid sequence, 273 residues long: Thiazole synthase (273 aa).

The active-site Schiff-base intermediate with DXP is Lys-111. 1-deoxy-D-xylulose 5-phosphate is bound by residues Gly-172, 198-199, and 220-221; these read AG and NS. The segment at 251-273 is disordered; it reads RLPRRGQASASSPTTGLISGKDK. Polar residues predominate over residues 258 to 267; it reads ASASSPTTGL.

The protein belongs to the ThiG family. In terms of assembly, homotetramer. Forms heterodimers with either ThiH or ThiS.

The protein localises to the cytoplasm. The catalysed reaction is [ThiS sulfur-carrier protein]-C-terminal-Gly-aminoethanethioate + 2-iminoacetate + 1-deoxy-D-xylulose 5-phosphate = [ThiS sulfur-carrier protein]-C-terminal Gly-Gly + 2-[(2R,5Z)-2-carboxy-4-methylthiazol-5(2H)-ylidene]ethyl phosphate + 2 H2O + H(+). The protein operates within cofactor biosynthesis; thiamine diphosphate biosynthesis. Functionally, catalyzes the rearrangement of 1-deoxy-D-xylulose 5-phosphate (DXP) to produce the thiazole phosphate moiety of thiamine. Sulfur is provided by the thiocarboxylate moiety of the carrier protein ThiS. In vitro, sulfur can be provided by H(2)S. This is Thiazole synthase from Synechococcus sp. (strain CC9902).